Consider the following 150-residue polypeptide: Galactose-binding lectin (150 aa).

Residues histidine 16 and glycine 19 each coordinate D-galactose. N-linked (GlcNAc...) asparagine glycosylation occurs at asparagine 26. Residues asparagine 27, 35–37 (DIH), histidine 64, and glycine 67 contribute to the D-galactose site. Residue asparagine 74 is glycosylated (N-linked (GlcNAc...) asparagine). Residues glutamate 75, 83-85 (DRH), histidine 108, and glycine 111 contribute to the D-galactose site. Residue asparagine 118 is glycosylated (N-linked (GlcNAc...) asparagine). D-galactose is bound by residues asparagine 119 and 127-129 (DKH).

Monomer in solution. Homodimer in solution. Exists as a monomer in solution when a low concentration (0.001 mg/ml) of it is present. Homodimers start to appear at a concentration of 0.01 mg/ml and tetramers at a concentration of 0.1 mg/ml. In terms of tissue distribution, highly expressed in mantle and to a lesser extent in muscle, hepatopancreas, gill and hemocytes.

Bacterial binding activity is inhibited by D-galactose. Hemagglutinating activity is independent of divalent cations Ca2(+) or Mg2(+). It is strongly inhibited by N-acetyl-D-galactosamine (GalNAc), D-galactose and D-talose, and to a lesser extent by melibiose and raffinose. Also inhibited by glycoprotein asialo-bovine submaxillary mucin (BSM). Not inhibited by D-glucose, D-fucose, D-galactitol, N-acetyl-D-glucosamine or lactose. Fungal binding activity is inhibited by D-galactose. Cytotoxic activity against Raji cell line is completely inhibited by galactose, melibiose and raffinose, but not by glucose or lactose. Galactose inhibits binding to laminin and BSM, but not to collagen, gelatin or fibronectin. Galactose-binding lectin. Binds both alpha and beta anomer of galactose (Gal), but has a stronger interaction with the glycans having alpha Gal at the non-reducing end and binds beta Gal weakly only in highly branched glycans. Has high affinity to Galalpha1-4Galbeta1-4GlcNAc. Binds N-acetyl-2-deoxy-2-amino-galactose (2-deoxy-GalNAc). Binds N-acetylgalactosamine (GalNAc). Binds porcine stomach mucin (PSM) with high affinity. Binds galactosamine. Binds laminin, bovine submaxillary mucin (BSM), fibronectin, type I collagen and gelatin with a decreasing affinity, respectively. Has hemagglutinating activity towards human type A erythrocytes. Also hemagglutinates human type 0, B and AB erythrocytes as well as rabbit and mouse erythrocytes. Agglutinates both Gram-positive and Gram-negative bacteria including B.subtilis ATCC 6633, S.aureus ATCC 21027 and E.coli 3254, respectively. No agglutination activity towards Gram-positive S.amurskyense CMM 3673. Has bacteriostatic activity on S.amurskyense CMM 3673, B.subtilis ATCC 6633, S.aureus ATCC 21027 and E.coli 3254. However, has no agglutination nor bacteriostatic activity on Gram-negative C.scophthalmum CIP 104199 or A.troitsensis KMM 3674. Inhibits growth of fungi from the genera Aspergillus, Penicillium, Trichoderma and st. Mycelia. Inhibits germination of spores and hyphal growth of them. Has dose-dependent cytotoxic effect on the human globotriaosylceramide (Gb3)-expressing Burkitt's lymphoma (Raji) cell line. Binds to Gb3 in these cells leading to activation of caspase-9/3 and PARP. Has dose-dependent cytotoxic effect on the Gb3-expressing human MCF-7 breast cancer cell line. No cytotoxic effect on myelogenous leukemia K562 cell line, which does not express Gb3. Activates immune responses in mice and increases cytokine production of TNF-alpha, IL-6 and MCP-1 in the serum and the peritoneal lavage of mice. Induces TNF-alpha and IL-6 secretion in mouse RAW264.7 macrophages, mouse bone marrow-derived macrophages, human THP-1 macrophages, human peripheral blood mononuclear cells (PBMCs) and human blood monocyte-derived macrophages. TNF-alpha production in macrophages could not be inhibited by GalNAc, GalN or Gal, indicating that induced cytokine production is separate from its sugar binding activity. Increases intracellular reactive oxygen species levels, expression and phosphorylation of protein kinases PKC alpha/delta, expression of COX-2 and NF-kappaB, and activates the MAPK pathway by increasing the phosphorylation of ERK1/2, JNK1/2 and p38 in mouse RAW264.7 macrophages. Induces endotoxin tolerance in lipopolysaccharide(LPS)-activated macrophages by down-regulating IRAK2 expression, reducing JNK1/2 phosphorylation and NF-kappaB activation. Can slightly increase the bactericidal activity of RAW264.7 macrophages. Has DNA-binding activity. Recognizes pathogen-associated molecular patterns (PAMPs) and binds to LPS from E.coli, but has only little binding to beta-1,3-glucan from E.gracilis and peptidoglycan from S.aureus. Activates secretion of TNF-alpha and IFN-gamma by the human peripheral blood cells (HPBCs). May be involved in innate immunity acting as an antibacterial and antifungal agent involved in the recognition and clearance of pathogens. The chain is Galactose-binding lectin from Crenomytilus grayanus (Gray mussel).